The chain runs to 733 residues: SWR1-complex protein 4 (733 aa).

2 disordered regions span residues 1–34 and 98–128; these read MTSH…RPNL and PDGT…DSSF. Residues 146 to 217 enclose the SANT domain; that stretch reads NTNLKHPDWT…DLKARYYEVA (72 aa). The stretch at 247-299 forms a coiled coil; that stretch reads KQEQNRKRFAENTLKRSSDEAREEEALLLEIKRIMARTERFNEERRELYNRLD. Low complexity predominate over residues 371–384; sequence AASRRESLAASSTA. Disordered regions lie at residues 371-488 and 564-733; these read AASR…GSGP and KKAE…KQKK. Basic and acidic residues-rich tracts occupy residues 387-423, 463-484, 564-589, and 610-653; these read NDHH…DRHG, PERR…HDRL, KKAE…KGGE, and DDAK…KGEE. The span at 699 to 710 shows a compositional bias: low complexity; it reads GSSSGAGASSGA.

Belongs to the SWC4 family. Component of the SWR1 chromatin-remodeling complex and of the NuA4 histone acetyltransferase complex.

It localises to the nucleus. In terms of biological role, component of the SWR1 complex which mediates the ATP-dependent exchange of histone H2A for the H2A variant H2A.Z leading to transcriptional regulation of selected genes by chromatin remodeling. Component of the NuA4 histone acetyltransferase complex which is involved in transcriptional activation of selected genes principally by acetylation of nucleosomal histone H4 and H2A. The NuA4 complex is also involved in DNA repair. The polypeptide is SWR1-complex protein 4 (crc-1) (Neurospora crassa (strain ATCC 24698 / 74-OR23-1A / CBS 708.71 / DSM 1257 / FGSC 987)).